The primary structure comprises 198 residues: Proteasome subunit beta 1 (198 aa).

Residues Met1–Ala8 constitute a propeptide, removed in mature form; by autocatalysis. The active-site Nucleophile is the Thr9.

Belongs to the peptidase T1B family. The 20S proteasome core is composed of 14 alpha and 14 beta subunits that assemble into four stacked heptameric rings, resulting in a barrel-shaped structure. The two inner rings, each composed of seven catalytic beta subunits, are sandwiched by two outer rings, each composed of seven alpha subunits. The catalytic chamber with the active sites is on the inside of the barrel. Has a gated structure, the ends of the cylinder being occluded by the N-termini of the alpha-subunits. Is capped at one or both ends by the proteasome regulatory ATPase, PAN.

Its subcellular location is the cytoplasm. The enzyme catalyses Cleavage of peptide bonds with very broad specificity.. With respect to regulation, the formation of the proteasomal ATPase PAN-20S proteasome complex, via the docking of the C-termini of PAN into the intersubunit pockets in the alpha-rings, triggers opening of the gate for substrate entry. Interconversion between the open-gate and close-gate conformations leads to a dynamic regulation of the 20S proteasome proteolysis activity. Its function is as follows. Component of the proteasome core, a large protease complex with broad specificity involved in protein degradation. This is Proteasome subunit beta 1 from Nitrosopumilus maritimus (strain SCM1).